The primary structure comprises 631 residues: Chaperone protein DnaK (631 aa).

Thr-197 carries the post-translational modification Phosphothreonine; by autocatalysis. A disordered region spans residues 598–631 (MYKKEQGQTGGTEQGGTEQKKSGGDDDVIDAEVE). The span at 622–631 (DDDVIDAEVE) shows a compositional bias: acidic residues.

This sequence belongs to the heat shock protein 70 family.

Functionally, acts as a chaperone. The protein is Chaperone protein DnaK of Nitratiruptor sp. (strain SB155-2).